A 378-amino-acid polypeptide reads, in one-letter code: Histone deacetylase 8 (378 aa).

The segment at 15–325 (RSVVYVYSPE…WTYLTGTVLG (311 aa)) is histone deacetylase. Residue D102 coordinates substrate. Residue H144 is the Proton acceptor of the active site. A substrate-binding site is contributed by G152. A divalent metal cation contacts are provided by D179, H181, and D268. A substrate-binding site is contributed by Y307.

Belongs to the histone deacetylase family. HD type 1 subfamily. A divalent metal cation is required as a cofactor.

It localises to the nucleus. It is found in the chromosome. The protein resides in the cytoplasm. The enzyme catalyses N(6)-acetyl-L-lysyl-[histone] + H2O = L-lysyl-[histone] + acetate. The catalysed reaction is N(6)-acetyl-L-lysyl-[protein] + H2O = L-lysyl-[protein] + acetate. It catalyses the reaction N(6)-(2E)-butenoyl-L-lysyl-[protein] + H2O = (2E)-2-butenoate + L-lysyl-[protein]. With respect to regulation, its activity is inhibited by trichostatin A (TSA) and butyrate, 2 well known histone deacetylase inhibitors. Functionally, histone deacetylase that catalyzes the deacetylation of lysine residues on the N-terminal part of the core histones (H2A, H2B, H3 and H4). Histone deacetylation gives a tag for epigenetic repression and plays an important role in transcriptional regulation, cell cycle progression and developmental events. Histone deacetylases act via the formation of large multiprotein complexes. Also involved in the deacetylation of non-histone proteins. In addition to protein deacetylase activity, also has protein-lysine deacylase activity: acts as a protein decrotonylase by mediating decrotonylation ((2E)-butenoyl) of histones. This chain is Histone deacetylase 8 (hdac8), found in Danio rerio (Zebrafish).